Here is a 102-residue protein sequence, read N- to C-terminus: Fe-S protein maturation auxiliary factor YitW (102 aa).

The protein belongs to the MIP18 family.

In terms of biological role, involved in the maturation of iron-sulfur (Fe-S) proteins. May function as a Fe-S cluster carrier. This is Fe-S protein maturation auxiliary factor YitW (yitW) from Bacillus subtilis (strain 168).